The following is a 275-amino-acid chain: MESLLTLPLAGEARVRILQITDTHLFAQKHEALLGVNTWESYQAVLEAIRPHQHEFDLIVATGDLAQDQSSAAYQHFAEGIASFRAPCVWLPGNHDFQPAMYSALQDAGISPAKRVFIGEQWQILLLDSQVFGVPHGELSEFQLEWLERKLADAPERHTLLLLHHHPLPAGCSWLDQHSLRNAGELDTVLAKFPHVKYLLCGHIHQELDLDWNGRRLLATPSTCVQFKPHCSNFTLDTIAPGWRTLELHADGTLTTEVHRLADTRFQPDTASEGY.

Asp22, His24, Asp64, Asn94, His164, His203, and His205 together coordinate Fe cation. AMP contacts are provided by residues His24, Asp64, and Asn94–His95. Residue His205 coordinates AMP.

It belongs to the cyclic nucleotide phosphodiesterase class-III family. Requires Fe(2+) as cofactor.

The enzyme catalyses 3',5'-cyclic AMP + H2O = AMP + H(+). Hydrolyzes cAMP to 5'-AMP. Plays an important regulatory role in modulating the intracellular concentration of cAMP, thereby influencing cAMP-dependent processes. This Escherichia coli O157:H7 protein is 3',5'-cyclic adenosine monophosphate phosphodiesterase CpdA.